We begin with the raw amino-acid sequence, 308 residues long: Acetylglutamate kinase (308 aa).

Substrate contacts are provided by residues 86–87 (GG), R108, and N201.

The protein belongs to the acetylglutamate kinase family. ArgB subfamily.

Its subcellular location is the cytoplasm. It catalyses the reaction N-acetyl-L-glutamate + ATP = N-acetyl-L-glutamyl 5-phosphate + ADP. It functions in the pathway amino-acid biosynthesis; L-arginine biosynthesis; N(2)-acetyl-L-ornithine from L-glutamate: step 2/4. Its function is as follows. Catalyzes the ATP-dependent phosphorylation of N-acetyl-L-glutamate. The sequence is that of Acetylglutamate kinase from Prochlorococcus marinus (strain MIT 9303).